We begin with the raw amino-acid sequence, 171 residues long: Large ribosomal subunit protein uL10 (171 aa).

This sequence belongs to the universal ribosomal protein uL10 family. In terms of assembly, part of the ribosomal stalk of the 50S ribosomal subunit. The N-terminus interacts with L11 and the large rRNA to form the base of the stalk. The C-terminus forms an elongated spine to which L12 dimers bind in a sequential fashion forming a multimeric L10(L12)X complex.

Its function is as follows. Forms part of the ribosomal stalk, playing a central role in the interaction of the ribosome with GTP-bound translation factors. The protein is Large ribosomal subunit protein uL10 of Lactococcus lactis subsp. cremoris (strain SK11).